The sequence spans 428 residues: Enolase (428 aa).

Gln163 provides a ligand contact to (2R)-2-phosphoglycerate. Residue Glu205 is the Proton donor of the active site. Mg(2+)-binding residues include Asp242, Glu286, and Asp313. Positions 338, 367, 368, and 389 each coordinate (2R)-2-phosphoglycerate. The active-site Proton acceptor is Lys338.

This sequence belongs to the enolase family. Mg(2+) is required as a cofactor.

The protein localises to the cytoplasm. It localises to the secreted. Its subcellular location is the cell surface. It catalyses the reaction (2R)-2-phosphoglycerate = phosphoenolpyruvate + H2O. It participates in carbohydrate degradation; glycolysis; pyruvate from D-glyceraldehyde 3-phosphate: step 4/5. Catalyzes the reversible conversion of 2-phosphoglycerate (2-PG) into phosphoenolpyruvate (PEP). It is essential for the degradation of carbohydrates via glycolysis. The protein is Enolase of Lactobacillus acidophilus (strain ATCC 700396 / NCK56 / N2 / NCFM).